The chain runs to 279 residues: Pantothenate synthetase (279 aa).

An ATP-binding site is contributed by 26-33 (MGNLHEGH). Catalysis depends on H33, which acts as the Proton donor. Residue Q57 participates in (R)-pantoate binding. Beta-alanine is bound at residue Q57. 144 to 147 (GKKD) lines the ATP pocket. Q150 provides a ligand contact to (R)-pantoate. Residues V173 and 181 to 184 (LSSR) contribute to the ATP site.

It belongs to the pantothenate synthetase family. In terms of assembly, homodimer.

It localises to the cytoplasm. It catalyses the reaction (R)-pantoate + beta-alanine + ATP = (R)-pantothenate + AMP + diphosphate + H(+). It participates in cofactor biosynthesis; (R)-pantothenate biosynthesis; (R)-pantothenate from (R)-pantoate and beta-alanine: step 1/1. Catalyzes the condensation of pantoate with beta-alanine in an ATP-dependent reaction via a pantoyl-adenylate intermediate. The chain is Pantothenate synthetase from Burkholderia cenocepacia (strain HI2424).